Reading from the N-terminus, the 201-residue chain is Holliday junction resolvase RecU (201 aa).

Positions 85, 87, 100, and 119 each coordinate Mg(2+).

The protein belongs to the RecU family. Mg(2+) serves as cofactor.

The protein resides in the cytoplasm. The enzyme catalyses Endonucleolytic cleavage at a junction such as a reciprocal single-stranded crossover between two homologous DNA duplexes (Holliday junction).. Its function is as follows. Endonuclease that resolves Holliday junction intermediates in genetic recombination. Cleaves mobile four-strand junctions by introducing symmetrical nicks in paired strands. Promotes annealing of linear ssDNA with homologous dsDNA. Required for DNA repair, homologous recombination and chromosome segregation. The polypeptide is Holliday junction resolvase RecU (Pediococcus pentosaceus (strain ATCC 25745 / CCUG 21536 / LMG 10740 / 183-1w)).